Reading from the N-terminus, the 145-residue chain is Protein ImpA (145 aa).

Catalysis depends on for autocatalytic cleavage activity residues serine 64 and lysine 101.

It belongs to the peptidase S24 family.

Involved in UV protection and mutation. The chain is Protein ImpA from Escherichia coli.